The sequence spans 161 residues: Nucleotide-binding protein Tcr_1902 (161 aa).

The protein belongs to the YajQ family.

In terms of biological role, nucleotide-binding protein. The protein is Nucleotide-binding protein Tcr_1902 of Hydrogenovibrio crunogenus (strain DSM 25203 / XCL-2) (Thiomicrospira crunogena).